The sequence spans 224 residues: MNQNQDKGQGLLGRKVGMMRIFTDDGDSIPVTVLDVSNNRVTQIKTSEVDGYSAVQVAFGSRRASRVNKASAGHFAKAGVEAGTVLKEFRVAATAASELKVGDVIAASLFEVGQKVDVQGVTIGKGYAGVIKRYNFGSGRATHGNSRSHNVPGSIGMAQDPGRVFPGKRMTGHLGDVTRTTQNLEIARIDADRQLLLVKGAVPGAKNGQVIVSPAVKVKAKKGA.

An N5-methylglutamine modification is found at Q159.

The protein belongs to the universal ribosomal protein uL3 family. As to quaternary structure, part of the 50S ribosomal subunit. Forms a cluster with proteins L14 and L19. In terms of processing, methylated by PrmB.

Functionally, one of the primary rRNA binding proteins, it binds directly near the 3'-end of the 23S rRNA, where it nucleates assembly of the 50S subunit. This is Large ribosomal subunit protein uL3 from Janthinobacterium sp. (strain Marseille) (Minibacterium massiliensis).